Here is a 233-residue protein sequence, read N- to C-terminus: uncharacterized protein (233 aa).

The N-terminal stretch at 1–23 (MEIKYFLVLLVGFLLVLPSIVNP) is a signal peptide. The tract at residues 42 to 217 (LDVNNPHNPN…HHHHQEASEC (176 aa)) is disordered. A compositionally biased stretch (low complexity) spans 45–64 (NNPHNPNNNPHNPHNPNNNP). The segment covering 65–211 (HHPHHLHHHH…HPHPHHHHHH (147 aa)) has biased composition (basic residues).

It localises to the secreted. This is an uncharacterized protein from Dictyostelium discoideum (Social amoeba).